A 452-amino-acid polypeptide reads, in one-letter code: uncharacterized protein (452 aa).

A signal peptide spans 1-20; that stretch reads MQFFGSLFVSLLGAAGLANA. The tract at residues 130-151 is disordered; that stretch reads TQSSSNSTSTMNSTGSVSGGSV.

Its subcellular location is the endoplasmic reticulum. This is an uncharacterized protein from Schizosaccharomyces pombe (strain 972 / ATCC 24843) (Fission yeast).